A 2496-amino-acid polypeptide reads, in one-letter code: Hornerin (2496 aa).

The interval 1–81 is S-100-like; the sequence is MPKLLESIVT…TEYLLMILKL (81 aa). EF-hand domains follow at residues 13–48 and 49–84; these read DVFY…LKNP and DDPD…LTKA. Residues Met27, Glu32, Asp62, Asp64, Asn66, Lys68, and Glu73 each contribute to the Ca(2+) site. Residues 82–98 form a s (spacer) region; the sequence is TKACNKIIGKDYCQASG. Residues 97–2496 form a disordered region; that stretch reads SGSKQKNHSH…SGQTSGCGSG (2400 aa). The 1; truncated repeat unit spans residues 99–145; the sequence is SKQKNHSHQHQEEQSKKETENKEQKGSISSSAGENDSYSRGSRGSNK. Basic and acidic residues predominate over residues 107–123; that stretch reads QHQEEQSKKETENKEQK. Over residues 124–134 the composition is skewed to polar residues; sequence GSISSSAGEND. The segment covering 144–153 has biased composition (basic residues); the sequence is NKSKSKKLRK. Repeat copies occupy residues 146 to 231, 232 to 321, 326 to 400, 401 to 491, 492 to 577, 578 to 668, 669 to 748, 749 to 839, 840 to 926, 927 to 1017, 1018 to 1097, 1098 to 1188, 1189 to 1274, 1275 to 1365, 1366 to 1445, 1446 to 1536, 1537 to 1622, 1623 to 1713, 1714 to 1793, 1794 to 1884, 1885 to 1970, 1971 to 2061, 2062 to 2141, 2142 to 2232, 2233 to 2312, 2313 to 2403, and 2410 to 2496. 3 stretches are compositionally biased toward low complexity: residues 183–194, 200–246, and 270–286; these read SGFSNSSGNGRP, SGFP…SGHS, and RESS…SEEP. Composition is skewed to polar residues over residues 294–319 and 326–355; these read RKNS…QGFG and SGQS…SSES. Low complexity-rich tracts occupy residues 362 to 379, 394 to 415, and 423 to 448; these read VSGS…STSG, SSGS…SGQS, and SGSR…QQFG. The span at 449 to 464 shows a compositional bias: gly residues; sequence SGSGRSSGFSQGGSGQ. Residues 465-565 show a composition bias toward low complexity; it reads GRSSRGGQQG…GQTSSSTRQG (101 aa). Ser506 and Ser508 each carry phosphoserine. A compositionally biased stretch (gly residues) spans 566-576; sequence SGQGQASGSGR. Composition is skewed to low complexity over residues 577–593 and 600–625; these read YGAS…GQST and SGSR…QRYG. Gly residues predominate over residues 626–641; it reads SGSGESSGFSQGGSGQ. Composition is skewed to low complexity over residues 642–670 and 679–713; these read GRSS…SRHG and SGQQ…GSGS. Arg646 is subject to Omega-N-methylarginine. Ser716 carries the phosphoserine modification. Positions 723-736 are enriched in low complexity; the sequence is GSTSGQTASSTRQG. The segment covering 737-747 has biased composition (gly residues); that stretch reads SGQGQASGSGR. 4 stretches are compositionally biased toward low complexity: residues 748-764, 771-796, 804-884, and 891-914; these read CGAS…GQST, SGSR…QRFG, GFSQ…SRPA, and SGRS…TRQG. Ser815 is subject to Phosphoserine. The span at 915 to 925 shows a compositional bias: gly residues; sequence SGQGQASGSGR. 2 stretches are compositionally biased toward low complexity: residues 926–942 and 949–974; these read YGAS…GQST and SGSR…QRYG. The span at 975–990 shows a compositional bias: gly residues; it reads SGSGESSGFSQGGSGQ. Composition is skewed to low complexity over residues 991-1019, 1028-1062, and 1072-1085; these read GRSS…SRHG, SGQQ…GSGS, and GSTS…TRQG. Arg995 carries the omega-N-methylarginine modification. Residues 1086–1096 are compositionally biased toward gly residues; the sequence is SGQGQASGSGR. 3 stretches are compositionally biased toward low complexity: residues 1097 to 1113, 1120 to 1145, and 1153 to 1262; these read CGAS…GQST, SGSR…QRFG, and GFSQ…TRQG. A Phosphoserine modification is found at Ser1229. A compositionally biased stretch (gly residues) spans 1263 to 1273; that stretch reads SGQGQASGSGR. Positions 1281–1292 are enriched in polar residues; the sequence is TSGCRSGQSTRY. Residues 1298–1322 are compositionally biased toward low complexity; sequence GSRNSSTQSRGRSTSRESSTSQRYG. Positions 1323–1338 are enriched in gly residues; that stretch reads SGSGESSGFSQGGSGQ. Low complexity-rich tracts occupy residues 1339–1367, 1376–1410, and 1420–1433; these read GRSS…SRHG, SGQQ…GSGS, and GSTS…TRQG. Arg1343 carries the post-translational modification Omega-N-methylarginine. The segment covering 1434 to 1444 has biased composition (gly residues); that stretch reads SGQGQASGSGR. Composition is skewed to low complexity over residues 1445-1461, 1468-1493, and 1501-1610; these read CGAS…GQST, SGSR…QRFG, and GFSQ…TRQG. Phosphoserine occurs at positions 1551 and 1553. The segment covering 1611 to 1621 has biased composition (gly residues); the sequence is SGQGQASGSGR. 2 stretches are compositionally biased toward low complexity: residues 1622–1631 and 1645–1670; these read YGASSGQTSG and SGSR…QRCG. Ser1650 carries the post-translational modification Phosphoserine. A compositionally biased stretch (gly residues) spans 1671–1686; the sequence is SGSGESSGFSQGGSGQ. Low complexity-rich tracts occupy residues 1687-1715, 1724-1758, and 1768-1781; these read GRSS…SRHG, SGQQ…GSGS, and GSTS…TRQG. Residue Arg1691 is modified to Omega-N-methylarginine. Residues 1782-1792 show a composition bias toward gly residues; it reads SGQGQASGSGR. Polar residues predominate over residues 1800 to 1811; it reads TSGCGSDQSTRY. Low complexity-rich tracts occupy residues 1816 to 1841 and 1849 to 1958; these read SGSR…QRFG and GFSQ…TRQG. A compositionally biased stretch (gly residues) spans 1959–1969; that stretch reads SGQGQASGSGR. Low complexity-rich tracts occupy residues 1970 to 1986 and 1993 to 2018; these read YGAS…GQST and SGSR…QRYG. A Phosphoserine modification is found at Ser2011. The span at 2019–2034 shows a compositional bias: gly residues; it reads SGSGESSGFSQGGSGQ. 2 stretches are compositionally biased toward low complexity: residues 2035 to 2063 and 2072 to 2106; these read GRSS…SRHG and SGQQ…GSGS. An Omega-N-methylarginine modification is found at Arg2039. Phosphoserine is present on residues Ser2109 and Ser2124. A compositionally biased stretch (low complexity) spans 2116–2129; it reads GSTSGQTASSTRQG. Positions 2130–2140 are enriched in gly residues; the sequence is SGQGQASGSGR. Low complexity-rich tracts occupy residues 2141–2157 and 2164–2189; these read CGAS…GQST and SGSR…QRYG. Positions 2190–2205 are enriched in gly residues; that stretch reads SGSGESSGFSQGGSGQ. Low complexity-rich tracts occupy residues 2206–2234 and 2243–2300; these read GRSS…SRHG and SGQQ…TRQG. Residue Arg2210 is modified to Omega-N-methylarginine. Positions 2301–2311 are enriched in gly residues; it reads SGQGQASGSGR. Low complexity-rich tracts occupy residues 2312 to 2328 and 2335 to 2360; these read YGAS…GQST and SGSR…QRYG. Ser2353 carries the post-translational modification Phosphoserine. Residues 2361-2376 show a composition bias toward gly residues; that stretch reads SGSGESSGFSQGGSGQ. Low complexity-rich tracts occupy residues 2377 to 2405, 2414 to 2448, and 2458 to 2471; these read GRSS…SRHG, SGQQ…GSGS, and GSTS…TRQG. Omega-N-methylarginine is present on Arg2381. The segment covering 2472–2482 has biased composition (gly residues); that stretch reads SGQGQASGSGR.

This sequence belongs to the S100-fused protein family. In the N-terminal section; belongs to the S-100 family. In terms of processing, processed during the process of epidermal differentiation. Post-translationally, forms covalent cross-links mediated by transglutaminase TGM3, between glutamine and the epsilon-amino group of lysine residues (in vitro). In terms of tissue distribution, embryonic skin. Highest level in the adult forestomach followed by the skin. Lower levels in the tongue, esophagus. Detected in the granular and cornified layers of the mature epidermis.

The protein resides in the cytoplasmic granule. Its function is as follows. Component of the epidermal cornified cell envelopes. The protein is Hornerin (Hrnr) of Mus musculus (Mouse).